A 160-amino-acid polypeptide reads, in one-letter code: Tic20 family protein (160 aa).

The next 4 helical transmembrane spans lie at 13–33 (FFSA…GGFL), 53–73 (FYYQ…MAVV), 87–107 (MQAI…AYVI), and 122–142 (NFAF…SVLG).

Belongs to the Tic20 family.

The protein localises to the cell membrane. The polypeptide is Tic20 family protein (Synechocystis sp. (strain ATCC 27184 / PCC 6803 / Kazusa)).